Here is a 563-residue protein sequence, read N- to C-terminus: Germacrene-A synthase (563 aa).

Asp-316, Asp-320, Asp-460, Thr-464, and Glu-468 together coordinate Mg(2+). A DDXXD motif motif is present at residues 316–320; it reads DDTYD.

This sequence belongs to the terpene synthase family. Tpsa subfamily. It depends on Mg(2+) as a cofactor. The cofactor is Mn(2+). As to expression, high expression in disk florets, moderate expression in ray florets and detected in leaves and stems, but not in roots.

It catalyses the reaction (2E,6E)-farnesyl diphosphate = (+)-(R)-germacrene A + diphosphate. Its pathway is secondary metabolite biosynthesis; terpenoid biosynthesis. In terms of biological role, sesquiterpene synthase involved in germacrene A biosynthesis. May be involved in the biosynthesis of the sesquiterpene lactone matricine, one of the major active compounds of chamomile flowers. This chain is Germacrene-A synthase, found in Matricaria chamomilla var. recutita (German chamomile).